The sequence spans 195 residues: MARCKS-related protein (195 aa).

The tract at residues 1–195 (MGSQSSKAPR…PTPASAEQNE (195 aa)) is disordered. The N-myristoyl glycine moiety is linked to residue Gly-2. Thr-14 is subject to Phosphothreonine. Low complexity predominate over residues 16–26 (EEAAGASPAKA). Residues Ser-22, Ser-36, Ser-41, and Ser-48 each carry the phosphoserine modification. Over residues 53–64 (GTDEAAGATGDA) the composition is skewed to low complexity. Ser-71 bears the Phosphoserine mark. The segment covering 76–85 (AKGEVPPKET) has biased composition (basic and acidic residues). Thr-85 carries the phosphothreonine modification. The segment covering 86-98 (PKKKKKFSFKKPF) has biased composition (basic residues). The segment at 87–110 (KKKKKFSFKKPFKLSGLSFKRNRK) is effector domain involved in lipid-binding and calmodulin-binding. Phosphoserine occurs at positions 93, 101, 104, 119, 120, and 135. Thr-148 carries the phosphothreonine modification. Residues Ser-151, Ser-162, and Ser-165 each carry the phosphoserine modification. Over residues 153–195 (EPQAKGAEASAASEEEAGPQATEPSTPSGPESGPTPASAEQNE) the composition is skewed to low complexity. Phosphothreonine is present on residues Thr-178 and Thr-187.

Belongs to the MARCKS family. Binds to filamentous actin (F-actin), but not to monomeric G-actin, independently of its phosphorylation status. Phosphorylated. Phosphorylation at Ser-120 and Thr-178 is non-redundantly catalyzed by MAPK8 in vivo. Phosphorylation at Thr-148 is preferentially catalyzed by MAPK8 in vivo, but this modification can also be catalyzed by other kinases in the absence of MAPK8. May be phosphorylated by protein kinase C, which disrupts the interaction with calmodulin.

The protein resides in the cytoplasm. It is found in the cytoskeleton. Its subcellular location is the cell membrane. In terms of biological role, controls cell movement by regulating actin cytoskeleton homeostasis and filopodium and lamellipodium formation. When unphosphorylated, induces cell migration. When phosphorylated by MAPK8, induces actin bundles formation and stabilization, thereby reducing actin plasticity, hence restricting cell movement, including neuronal migration. May be involved in coupling the protein kinase C and calmodulin signal transduction systems. This is MARCKS-related protein (MARCKSL1) from Homo sapiens (Human).